A 173-amino-acid chain; its full sequence is Helix-loop-helix protein lin-22 (173 aa).

A basic motif region spans residues 21–34 (KKIKNKPLMEKKRR). The bHLH domain maps to 21–78 (KKIKNKPLMEKKRRARINKSLSQLKQILIQDEHKNSIQHSKWEKADILEMAVEYLQQL). Positions 35 to 78 (ARINKSLSQLKQILIQDEHKNSIQHSKWEKADILEMAVEYLQQL) are helix-loop-helix motif. A compositionally biased stretch (low complexity) spans 83–95 (PCSLSPSTSSIST). Residues 83–102 (PCSLSPSTSSISTPPTPKEE) are disordered.

Expressed mostly in the seam (stem) cells and hypodermis (hyp7), but also to a lesser extent in the intestine.

The protein localises to the nucleus. Probable transcription factor. During development, required for cell fate specification, probably by promoting or repressing expression of genes involved in specific cell fate. Involved in specifying lineages derived from the epidermal stem cells of the lateral ectoderm, known as seam cells. Modulates symmetric divisions of seam cells, perhaps in concert with the Wnt signaling pathway. May repress expression of homeobox genes mab-5, egl-5 and lin-39. The chain is Helix-loop-helix protein lin-22 from Caenorhabditis elegans.